A 564-amino-acid chain; its full sequence is Beta-N-acetylglucosaminidase/beta-glucosidase (564 aa).

D283 acts as the Nucleophile in catalysis.

It belongs to the glycosyl hydrolase 3 family.

The enzyme catalyses Hydrolysis of terminal non-reducing N-acetyl-D-hexosamine residues in N-acetyl-beta-D-hexosaminides.. It catalyses the reaction Hydrolysis of terminal, non-reducing beta-D-glucosyl residues with release of beta-D-glucose.. Catalyzes the cleavage of beta-N-acetyl-D-glucosaminides and beta-D-glucosides. Might be involved in the degradation of glucuronic acid-containing glycosaminoglycans such as hyaluronic acid. The chain is Beta-N-acetylglucosaminidase/beta-glucosidase (nag3) from Cellulomonas fimi.